We begin with the raw amino-acid sequence, 263 residues long: ATP synthase subunit a (263 aa).

5 helical membrane-spanning segments follow: residues 31–51 (LDTL…FYSI), 89–109 (IGSL…MDLI), 133–153 (DPNA…VYTF), 205–225 (LFGN…LPFW), and 235–255 (AIFH…LTIV).

Belongs to the ATPase A chain family. F-type ATPases have 2 components, CF(1) - the catalytic core - and CF(0) - the membrane proton channel. CF(1) has five subunits: alpha(3), beta(3), gamma(1), delta(1), epsilon(1). CF(0) has three main subunits: a(1), b(2) and c(9-12). The alpha and beta chains form an alternating ring which encloses part of the gamma chain. CF(1) is attached to CF(0) by a central stalk formed by the gamma and epsilon chains, while a peripheral stalk is formed by the delta and b chains.

Its subcellular location is the cell inner membrane. Functionally, key component of the proton channel; it plays a direct role in the translocation of protons across the membrane. This Dichelobacter nodosus (strain VCS1703A) protein is ATP synthase subunit a.